The chain runs to 215 residues: Kinetochore protein Spc25 (215 aa).

A coiled-coil region spans residues Asp-43–Ala-114.

The protein belongs to the SPC25 family. As to quaternary structure, component of the Ndc80 complex, which is composed of Ndc80, Nuf2 and Spc25.

The protein localises to the nucleus. The protein resides in the chromosome. It localises to the centromere. It is found in the kinetochore. In terms of biological role, acts as a component of the essential kinetochore-associated Ndc80 complex, which is required for chromosome segregation and spindle checkpoint activity during meiosis and mitosis. Required for kinetochore integrity and the organization of stable microtubule binding sites in the outer plate of the kinetochore. Participates in SAC signaling that responds specifically to disruptions in spindle microtubule dynamics. The NDC80 complex synergistically enhances the affinity of the SKA1 complex for microtubules and may allow the NDC80 complex to track depolymerizing microtubules. The protein is Kinetochore protein Spc25 of Drosophila ananassae (Fruit fly).